The following is a 382-amino-acid chain: S-adenosylmethionine synthase (382 aa).

H14 contacts ATP. Mg(2+) is bound at residue D16. E42 is a binding site for K(+). Residues E55 and Q91 each coordinate L-methionine. Residues 91–101 (QSENIAMGVNL) are flexible loop. Residues 156 to 158 (DMK), 222 to 223 (KF), D231, 237 to 238 (RK), A254, and K258 contribute to the ATP site. D231 contacts L-methionine. K262 provides a ligand contact to L-methionine.

Belongs to the AdoMet synthase family. In terms of assembly, homotetramer; dimer of dimers. Mg(2+) serves as cofactor. The cofactor is K(+).

Its subcellular location is the cytoplasm. The catalysed reaction is L-methionine + ATP + H2O = S-adenosyl-L-methionine + phosphate + diphosphate. Its pathway is amino-acid biosynthesis; S-adenosyl-L-methionine biosynthesis; S-adenosyl-L-methionine from L-methionine: step 1/1. Functionally, catalyzes the formation of S-adenosylmethionine (AdoMet) from methionine and ATP. The overall synthetic reaction is composed of two sequential steps, AdoMet formation and the subsequent tripolyphosphate hydrolysis which occurs prior to release of AdoMet from the enzyme. In Mycoplasmopsis synoviae (strain 53) (Mycoplasma synoviae), this protein is S-adenosylmethionine synthase.